Here is a 1303-residue protein sequence, read N- to C-terminus: MKVADATPTPCIDFSKIQSIINPPDLLKVQLDSFHNFIQDSVPLEKRKDQGLEKVLRSAFPITDTRGLYLLEYISYSFDKPKYTVEECIERGLTYDVSLKIKLKLSYKDEADEPDWKETIQQEVYLGRIPYMTDRGTFIINGAERVVVAQLHRSPGVVFSEAVHPNGKKMYSAKIVPTRGSWIEFQTDINNQIFVYIDQKKNFLVTALLRAIGFAKDEDILGLFDLVEEVEVSSKSSKREQLLGQYLASDIIDMTTGEVVPARAAITEEIIDQIVAAGYKTVKVMKTTSPEKGVDKSVIINTILNDSSATEEEALEIVYEELRSNEAPDIDAARSFLERTFFNQKKYDLGDVGRYRIQKKLQNELAELSAYLEKRPELKELSDAIYERILQTISTYSEEPIGEDILVLTHYDIIAVINYLIKLINGMAEVDDVDHLANRRVRSVGEQLAAQFVIGLARMGKNVREKLNSRDTDKIAPADLINARTVSSVVSSFFATSQLSQFMDQTNPLAEMTNKRRVSALGPGGLTRERAGFEVRDVHYTHYGRLCPIETPEGPNIGLISSLSVYAEINDKGFIQTPYRVVENGQVTDKVVMLSAEDEENKITVPVSIELDENNRIAAESVQARTKGDYPLVLAEEVNYMDVSPVQIVSAAAALIPFLEHDDGNRALMGANMQRQAVPLLVSEAPIVGTGMEAKVARDSRAVIVAEGPGVVQCVTADRIEVRYDLDPENNTVSLLDPDEGVKVYKLIKFKRSNQDTCISQRPLVHNGQRVNAGDVLADSSSTDNGELALGKNVLVAFMPWRGYNFEDAIVLSERLVYDDVFTSIHVHEFESSVRDTKRGEEQFTRDIYNVSEDALRNLDENGIVRIGAEVKERDILVGKITPKGESDPTPEEKLLRAIFGDKSSDVKDASMHVPAGMKGIVIKTKLFSRKKKIGMDVKERMEAIDKQFDLKEADLRSRFAKWMKQYLNGKKSVAITSDKGKVLVPEGTVIDEALLAKFNGLPFLESIDLSKGIVSGAKTNENVVRLIREYRLKLKDLSDERENEKYKINVGDELPPGIEELAKVYIAQKRKIQVGDKMAGRHGNKGVVGKILPIEDMPFMEDGTPVDIVLNPLGVPSRMNIGQLYETSLGWAGKKLGVKFKTPIFSGATYTEVQEYLEKAGLPGHGKVKLFDGRTGEQFHDEVTVGYIYMLKLSHLVDDKIHARSIGPYSLITQQPLGGKAQFGGQRFGEMEVWALEAYGAANILREMLTVKSDDVIGRNKTYEAIVKGQNLPEPGTPESFNVLIRELQGLGLEIRIDDRVP.

Belongs to the RNA polymerase beta chain family. In terms of assembly, the RNAP catalytic core consists of 2 alpha, 1 beta, 1 beta' and 1 omega subunit. When a sigma factor is associated with the core the holoenzyme is formed, which can initiate transcription.

The catalysed reaction is RNA(n) + a ribonucleoside 5'-triphosphate = RNA(n+1) + diphosphate. Its function is as follows. DNA-dependent RNA polymerase catalyzes the transcription of DNA into RNA using the four ribonucleoside triphosphates as substrates. This chain is DNA-directed RNA polymerase subunit beta, found in Chlorobaculum tepidum (strain ATCC 49652 / DSM 12025 / NBRC 103806 / TLS) (Chlorobium tepidum).